A 186-amino-acid polypeptide reads, in one-letter code: Large ribosomal subunit protein uL6 (186 aa).

This sequence belongs to the universal ribosomal protein uL6 family. Part of the 50S ribosomal subunit.

Its function is as follows. This protein binds to the 23S rRNA, and is important in its secondary structure. It is located near the subunit interface in the base of the L7/L12 stalk, and near the tRNA binding site of the peptidyltransferase center. This chain is Large ribosomal subunit protein uL6, found in Ignicoccus hospitalis (strain KIN4/I / DSM 18386 / JCM 14125).